The primary structure comprises 964 residues: E3 ubiquitin-protein ligase TRIM37 (964 aa).

Residue Met-1 is modified to N-acetylmethionine. Residues 15-55 (CFICMEKLRDARLCPHCSKLCCFSCIRRWLTEQRAQCPHCR) form an RING-type; degenerate zinc finger. A B box-type zinc finger spans residues 90-132 (NEKDKCENHHEKLSVFCWTCKKCICHQCALWGGMHGGHTFKPL). Residues Cys-95, His-98, Cys-117, and His-124 each contribute to the Zn(2+) site. Residues 132-234 (LAEIYEQHVT…VEHQLRSCSK (103 aa)) adopt a coiled-coil conformation. The 128-residue stretch at 276-403 (YDSATFVLEN…NDTVILRFQV (128 aa)) folds into the MATH domain. Residues 419–450 (ITQLEAAQTSYIQQINNLKERLTIELSRTQKS) adopt a coiled-coil conformation. Ser-454 is modified (phosphoserine). Disordered stretches follow at residues 477–513 (CSDMLLEGGPTTASVREAKEDEEDEEKIQNEDYHHEL), 530–554 (QLDGSSSSASSTATSNTEENDIDEE), and 640–663 (RPPASLLQPTASYSRKDKDQRKQQ). Over residues 503-513 (KIQNEDYHHEL) the composition is skewed to basic and acidic residues. Low complexity predominate over residues 534 to 544 (SSSSASSTATS). Positions 673–700 (KMLKRLKTQMAEVRCMKTDVKNTLSEIK) form a coiled coil. The span at 752 to 761 (NSTNKKSNSP) shows a compositional bias: polar residues. 2 disordered regions span residues 752 to 812 (NSTN…SPRA) and 891 to 964 (GASA…NSGR). A compositionally biased stretch (basic and acidic residues) spans 776–788 (RAVDPGENSRSKG). Positions 794 to 807 (SEGSPGSSQSGSRH) are enriched in low complexity. A compositionally biased stretch (acidic residues) spans 904–916 (SDIECDTENEEQE). Positions 955–964 (SFNTDENSGR) are enriched in polar residues.

The protein belongs to the TRIM/RBCC family. As to quaternary structure, associates with the PRC2/EED-EZH2 complex. Post-translationally, auto-ubiquitinated. As to expression, ubiquitous. Highly expressed in testis, while it is weakly expressed in other tissues.

The protein resides in the chromosome. The protein localises to the cytoplasm. Its subcellular location is the perinuclear region. It localises to the peroxisome membrane. It catalyses the reaction S-ubiquitinyl-[E2 ubiquitin-conjugating enzyme]-L-cysteine + [acceptor protein]-L-lysine = [E2 ubiquitin-conjugating enzyme]-L-cysteine + N(6)-ubiquitinyl-[acceptor protein]-L-lysine.. Its pathway is protein modification; protein ubiquitination. Functionally, E3 ubiquitin-protein ligase required to prevent centriole reduplication. Probably acts by ubiquitinating positive regulators of centriole reduplication. Mediates monoubiquitination of 'Lys-119' of histone H2A (H2AK119Ub), a specific tag for epigenetic transcriptional repression: associates with some Polycomb group (PcG) multiprotein PRC2-like complex and mediates repression of target genes. Also acts as a positive regulator of peroxisome import by mediating monoubiquitination of PEX5 at 'Lys-472': monoubiquitination promotes PEX5 stabilitation by preventing its polyubiquitination and degradation by the proteasome. Has anti-HIV activity. In Homo sapiens (Human), this protein is E3 ubiquitin-protein ligase TRIM37.